The following is a 204-amino-acid chain: 8-oxoguanine DNA glycosylase/AP lyase (204 aa).

Catalysis depends on residues lysine 129 and aspartate 147.

The protein belongs to the type-2 OGG1 family.

It catalyses the reaction 2'-deoxyribonucleotide-(2'-deoxyribose 5'-phosphate)-2'-deoxyribonucleotide-DNA = a 3'-end 2'-deoxyribonucleotide-(2,3-dehydro-2,3-deoxyribose 5'-phosphate)-DNA + a 5'-end 5'-phospho-2'-deoxyribonucleoside-DNA + H(+). Its function is as follows. Catalyzes the excision of an oxidatively damaged form of guanine (7,8-dihydro-8-oxoguanine = 8-oxoG) from DNA. Also cleaves the DNA backbone at apurinic/apyrimidinic sites (AP sites). The polypeptide is 8-oxoguanine DNA glycosylase/AP lyase (Thermoplasma acidophilum (strain ATCC 25905 / DSM 1728 / JCM 9062 / NBRC 15155 / AMRC-C165)).